The primary structure comprises 710 residues: Polyribonucleotide nucleotidyltransferase (710 aa).

Positions 491 and 497 each coordinate Mg(2+). Positions 559 to 618 (PRLITIKINPEKIRDVIGKGGAVIRALTEETGTQIDISDEGVVTIASVDAAAGQEAKRRI) constitute a KH domain. The region spanning 628–696 (GKVYEGTVLK…DRGRLKLSMK (69 aa)) is the S1 motif domain.

It belongs to the polyribonucleotide nucleotidyltransferase family. Mg(2+) is required as a cofactor.

Its subcellular location is the cytoplasm. It carries out the reaction RNA(n+1) + phosphate = RNA(n) + a ribonucleoside 5'-diphosphate. Its function is as follows. Involved in mRNA degradation. Catalyzes the phosphorolysis of single-stranded polyribonucleotides processively in the 3'- to 5'-direction. This Herminiimonas arsenicoxydans protein is Polyribonucleotide nucleotidyltransferase.